A 330-amino-acid chain; its full sequence is Taste receptor type 2 member 136 (330 aa).

Residues 1–32 (MKSQPVTQELHFIFPLFKTISSDIMSFLVSIA) lie on the Extracellular side of the membrane. A helical transmembrane segment spans residues 33–53 (GIAMLAQIVLGTFANVFIVLV). The Cytoplasmic portion of the chain corresponds to 54–73 (TCTDCIRRRKLFLADGILTS). Residues 74–94 (LAFCRIGMLWVILISWCSIVF) form a helical membrane-spanning segment. Residues 95-122 (HQALSLQVRFSICVGWAVTNHFNMWLAT) are Extracellular-facing. Residues 123–143 (ILSILYLLKIGNFSNLIFLGL) traverse the membrane as a helical segment. The Cytoplasmic portion of the chain corresponds to 144–149 (KRKIKS). Residues 150–170 (VFIVVLLASLVLLFPNLITVT) traverse the membrane as a helical segment. Residues 171–201 (VCETVQANGYRGNLTGKTKRTYFMNLTAMIS) lie on the Extracellular side of the membrane. N-linked (GlcNAc...) asparagine glycans are attached at residues N183 and N195. The helical transmembrane segment at 202–222 (FTLDNIISFTISMVCFLLLIY) threads the bilayer. At 223-248 (SLCKHLRTMRLYGKGPHNPSASAHIK) the chain is on the cytoplasmic side. The helical transmembrane segment at 249 to 269 (ALQAVISFLLLFSMFILSLII) threads the bilayer. Over 270-283 (SGYNYMKPLNEPVH) the chain is Extracellular. Residues 284–304 (LICQLIGTLYPSSHSYVLLWG) traverse the membrane as a helical segment. Residues 305-330 (NRRIKLAFVLAMVQVRARLWLKEEKP) are Cytoplasmic-facing.

The protein belongs to the G-protein coupled receptor T2R family.

It localises to the membrane. Putative taste receptor which may play a role in the perception of bitterness. The polypeptide is Taste receptor type 2 member 136 (Rattus norvegicus (Rat)).